A 125-amino-acid polypeptide reads, in one-letter code: Small ribosomal subunit protein uS12 (125 aa).

3-methylthioaspartic acid is present on Asp-89. The disordered stretch occupies residues 101 to 125 (SLDTAGVKDRKQSRSKYGAKRPKKA). A compositionally biased stretch (basic residues) spans 113–125 (SRSKYGAKRPKKA).

The protein belongs to the universal ribosomal protein uS12 family. Part of the 30S ribosomal subunit. Contacts proteins S8 and S17. May interact with IF1 in the 30S initiation complex.

With S4 and S5 plays an important role in translational accuracy. Functionally, interacts with and stabilizes bases of the 16S rRNA that are involved in tRNA selection in the A site and with the mRNA backbone. Located at the interface of the 30S and 50S subunits, it traverses the body of the 30S subunit contacting proteins on the other side and probably holding the rRNA structure together. The combined cluster of proteins S8, S12 and S17 appears to hold together the shoulder and platform of the 30S subunit. This is Small ribosomal subunit protein uS12 from Thiobacillus denitrificans (strain ATCC 25259 / T1).